A 307-amino-acid polypeptide reads, in one-letter code: Chlorophyll a-b binding protein 1, chloroplastic (307 aa).

A chloroplast-targeting transit peptide spans 1–44 (MAPYSVVASVLAAAPPQQSGSVRQLPSTINRAITQRSQSRHVAS). Residues 34 to 54 (TQRSQSRHVASASSASSPTTM) are disordered. Positions 52, 63, 64, 65, 68, 81, 86, 89, 90, 91, and 92 each coordinate chlorophyll a. Leucine 96 is a loroxanthin binding site. Residues 111-143 (NYDESRLRWLLEGELYNGRLAMLAVVGVLTVEA) form a helical membrane-spanning segment. Chlorophyll a contacts are provided by leucine 120, glutamate 124, asparagine 127, methionine 132, and lysine 146. Tryptophan 149 serves as a coordination point for loroxanthin. Chlorophyll a contacts are provided by glutamate 151, tyrosine 163, histidine 171, glutamate 178, arginine 181, glutamate 190, arginine 198, and aspartate 200. A helical membrane pass occupies residues 161-186 (TPYVVAVVGGHLAFALLEKKRLENFR). Positions 200 and 202 each coordinate all-trans-violaxanthin. The chlorophyll a site is built by leucine 204, asparagine 208, tyrosine 214, asparagine 215, alanine 218, asparagine 222, and arginine 224. Residues 213–238 (DYNRQAEVRNCRLAMLTFLGFSVQAW) traverse the membrane as a helical segment. Phenylalanine 230 provides a ligand contact to loroxanthin. Position 233 (phenylalanine 233) interacts with all-trans-violaxanthin. Chlorophyll a is bound at residue glutamine 236. Position 244 (proline 244) interacts with all-trans-violaxanthin. The chlorophyll a site is built by asparagine 247, histidine 251, proline 255, phenylalanine 256, alanine 258, asparagine 259, isoleucine 260, and phenylalanine 274. A helical membrane pass occupies residues 265–289 (DRGTNVVAIFSAFAAVMHIAELARE).

It belongs to the light-harvesting chlorophyll a/b-binding (LHC) protein family. As to quaternary structure, homooligomer. Component of a light-harvesting complex (LHC) consisting of 11 chlorophyll a-b binding proteins. It depends on Binds 11 chlorophylls (Chl-a and Chl-b) and the 2 carotenoids violaxanthin and loroxanthin. as a cofactor.

Its subcellular location is the plastid. It is found in the chloroplast thylakoid membrane. Its function is as follows. Component of a light-harvesting complex (LHC). The LHC functions as a light receptor, it captures and delivers excitation energy to photosystems with which it is closely associated. Functions in a far-red LHC by absorbing far-red light and promoting photosystem II (PSII) excitation, likely with entropy-driven uphill excitation energy transfer. Exhibits a typical absorption band at 671 nm (Qy band), as well as a large far-red absorption band at 706.5 together with fluorescence emission at around 713 nm (F713). This chain is Chlorophyll a-b binding protein 1, chloroplastic, found in Prasiola crispa (Green alga).